A 146-amino-acid chain; its full sequence is Mediator of RNA polymerase II transcription subunit 31 (146 aa).

The segment at 121–146 is disordered; sequence NANDQDENKEKEENKEVPEVRINGTN. The segment covering 126–139 has biased composition (basic and acidic residues); sequence DENKEKEENKEVPE.

It belongs to the Mediator complex subunit 31 family. As to quaternary structure, component of the Mediator complex.

It localises to the nucleus. Component of the Mediator complex, a coactivator involved in the regulated transcription of nearly all RNA polymerase II-dependent genes. Mediator functions as a bridge to convey information from gene-specific regulatory proteins to the basal RNA polymerase II transcription machinery. Mediator is recruited to promoters by direct interactions with regulatory proteins and serves as a scaffold for the assembly of a functional preinitiation complex with RNA polymerase II and the general transcription factors. This is Mediator of RNA polymerase II transcription subunit 31 (SOH1) from Candida albicans (strain SC5314 / ATCC MYA-2876) (Yeast).